The following is a 217-amino-acid chain: Probable transaldolase (217 aa).

Lys-83 functions as the Schiff-base intermediate with substrate in the catalytic mechanism.

Belongs to the transaldolase family. Type 3B subfamily.

Its subcellular location is the cytoplasm. It carries out the reaction D-sedoheptulose 7-phosphate + D-glyceraldehyde 3-phosphate = D-erythrose 4-phosphate + beta-D-fructose 6-phosphate. Its pathway is carbohydrate degradation; pentose phosphate pathway; D-glyceraldehyde 3-phosphate and beta-D-fructose 6-phosphate from D-ribose 5-phosphate and D-xylulose 5-phosphate (non-oxidative stage): step 2/3. In terms of biological role, transaldolase is important for the balance of metabolites in the pentose-phosphate pathway. The polypeptide is Probable transaldolase (Sinorhizobium medicae (strain WSM419) (Ensifer medicae)).